The sequence spans 701 residues: Type 3 secretion system secretin (701 aa).

An N-terminal signal peptide occupies residues 1–21 (MRKALMWLPLLLIGLSPATWA). Residues 229-238 (RGNGLAGGGS) show a composition bias toward gly residues. Residues 229 to 252 (RGNGLAGGGSPDTPSLPMSSSGLD) form a disordered region. Positions 240 to 252 (DTPSLPMSSSGLD) are enriched in polar residues.

Belongs to the bacterial secretin family. T3SS SctC subfamily. As to quaternary structure, the core secretion machinery of the T3SS is composed of approximately 20 different proteins, including cytoplasmic components, a base, an export apparatus and a needle. This subunit is part of the base, which anchors the injectisome in the bacterial cell envelope. Forms a stable homooligomeric complex.

It is found in the cell outer membrane. Component of the type III secretion system (T3SS), also called injectisome, which is used to inject bacterial effector proteins into eukaryotic host cells. Forms a ring-shaped multimeric structure with an apparent central pore in the outer membrane. Involved in the secretion of a proteinaceous elicitor of the hypersensitivity response in plants. The chain is Type 3 secretion system secretin from Pseudomonas syringae pv. syringae.